The primary structure comprises 557 residues: MSNPRHNEREVRSPRGDELNAKSWLTEAPLRMLMNNLDPDVAERPHELVVYGGIGRAARTWDDFDKIVATLKTLNEDETLLVQSGKPVGVFRTHKDAPRVLIANSNLVPHWATWDHFNELDKKGLAMYGQMTAGSWIYIGAQGIVQGTYETFVEAGRQHYDGNLKGKWILTGGLGGMGGAQPLAAVMAGACCLAVECDETRADFRLRTRYVDEKTHSLDEALAKIDEWTKAGEAKSIALIGNAAEIYPELVKRGVRPDIVTDQTSAHDPVHGYLPIGWTVAEWRAKQESDPKGVAKAARASMKVQVQAMLDFWNAGIPTVDYGNNIRQMALEEGLENAFDFPGFVPAYIRPLFCRGVGPFRWAALSGDPEDIAKTDAKVKELLPDNKHLHNWLDMAKERIEFQGLPARICWVGLGDRHRLGLAFNEMVRNGELKAPIVIGRDHLDSGSVASPNRETEAMKDGSDAVSDWPLLNALLNTASGATWVSLHHGGGVGMGFSQHSGMVICCDGTEDADQRIGRVLWNDPATGVMRHADAGYDIALDWAKQQGLRLPAILGN.

The segment at 1 to 20 is disordered; sequence MSNPRHNEREVRSPRGDELN. Residues 52–53, glutamine 130, 176–178, glutamate 196, arginine 201, 242–243, 263–267, 273–274, and tyrosine 322 contribute to the NAD(+) site; these read GG, GMG, NA, QTSAH, and YL. Residue cysteine 410 is part of the active site. Glycine 492 serves as a coordination point for NAD(+).

This sequence belongs to the urocanase family. Requires NAD(+) as cofactor.

The protein localises to the cytoplasm. It catalyses the reaction 4-imidazolone-5-propanoate = trans-urocanate + H2O. The protein operates within amino-acid degradation; L-histidine degradation into L-glutamate; N-formimidoyl-L-glutamate from L-histidine: step 2/3. In terms of biological role, catalyzes the conversion of urocanate to 4-imidazolone-5-propionate. This Brucella anthropi (strain ATCC 49188 / DSM 6882 / CCUG 24695 / JCM 21032 / LMG 3331 / NBRC 15819 / NCTC 12168 / Alc 37) (Ochrobactrum anthropi) protein is Urocanate hydratase.